The sequence spans 117 residues: Iron-sulfur cluster insertion protein ErpA (117 aa).

Iron-sulfur cluster is bound by residues Cys-45, Cys-109, and Cys-111.

Belongs to the HesB/IscA family. Homodimer. It depends on iron-sulfur cluster as a cofactor.

In terms of biological role, required for insertion of 4Fe-4S clusters for at least IspG. The sequence is that of Iron-sulfur cluster insertion protein ErpA from Blochmanniella pennsylvanica (strain BPEN).